Reading from the N-terminus, the 245-residue chain is 1-(5-phosphoribosyl)-5-[(5-phosphoribosylamino)methylideneamino] imidazole-4-carboxamide isomerase (245 aa).

Aspartate 10 functions as the Proton acceptor in the catalytic mechanism. Catalysis depends on aspartate 129, which acts as the Proton donor.

The protein belongs to the HisA/HisF family.

The protein localises to the cytoplasm. The catalysed reaction is 1-(5-phospho-beta-D-ribosyl)-5-[(5-phospho-beta-D-ribosylamino)methylideneamino]imidazole-4-carboxamide = 5-[(5-phospho-1-deoxy-D-ribulos-1-ylimino)methylamino]-1-(5-phospho-beta-D-ribosyl)imidazole-4-carboxamide. The protein operates within amino-acid biosynthesis; L-histidine biosynthesis; L-histidine from 5-phospho-alpha-D-ribose 1-diphosphate: step 4/9. The protein is 1-(5-phosphoribosyl)-5-[(5-phosphoribosylamino)methylideneamino] imidazole-4-carboxamide isomerase of Parafrankia sp. (strain EAN1pec).